The following is a 128-amino-acid chain: Gastrotropin (128 aa).

A2 is modified (N-acetylalanine).

This sequence belongs to the calycin superfamily. Fatty-acid binding protein (FABP) family. In terms of tissue distribution, expressed in ileum.

The protein resides in the cytoplasm. It is found in the membrane. Functionally, binds to bile acids and is involved in enterohepatic bile acid metabolism. Required for efficient apical to basolateral transport of conjugated bile acids in ileal enterocytes. Stimulates gastric acid and pepsinogen secretion. The polypeptide is Gastrotropin (FABP6) (Oryctolagus cuniculus (Rabbit)).